Here is a 282-residue protein sequence, read N- to C-terminus: uncharacterized protein (282 aa).

Tyr-50 acts as the Proton donor in catalysis. A substrate-binding site is contributed by His-115.

It belongs to the aldo/keto reductase family.

This is an uncharacterized protein from Saccharomyces cerevisiae (strain ATCC 204508 / S288c) (Baker's yeast).